Here is a 70-residue protein sequence, read N- to C-terminus: Cytochrome c oxidase subunit 8B, mitochondrial (70 aa).

The transit peptide at 1–24 directs the protein to the mitochondrion; that stretch reads MSRLAPPLRLLQAPLKCWAVPKAH. The Mitochondrial matrix portion of the chain corresponds to 25-35; it reads VSAKPARTPTS. A helical membrane pass occupies residues 36–59; that stretch reads PMEQAVGLSVMFVSFLVPSGWVLS. Residues 60–70 are Mitochondrial intermembrane-facing; that stretch reads HLESYKKSSTT.

It belongs to the cytochrome c oxidase VIII family. Component of the cytochrome c oxidase (complex IV, CIV), a multisubunit enzyme composed of 14 subunits. The complex is composed of a catalytic core of 3 subunits MT-CO1, MT-CO2 and MT-CO3, encoded in the mitochondrial DNA, and 11 supernumerary subunits COX4I, COX5A, COX5B, COX6A, COX6B, COX6C, COX7A, COX7B, COX7C, COX8 and NDUFA4, which are encoded in the nuclear genome. The complex exists as a monomer or a dimer and forms supercomplexes (SCs) in the inner mitochondrial membrane with NADH-ubiquinone oxidoreductase (complex I, CI) and ubiquinol-cytochrome c oxidoreductase (cytochrome b-c1 complex, complex III, CIII), resulting in different assemblies (supercomplex SCI(1)III(2)IV(1) and megacomplex MCI(2)III(2)IV(2)).

Its subcellular location is the mitochondrion inner membrane. Its pathway is energy metabolism; oxidative phosphorylation. In terms of biological role, component of the cytochrome c oxidase, the last enzyme in the mitochondrial electron transport chain which drives oxidative phosphorylation. The respiratory chain contains 3 multisubunit complexes succinate dehydrogenase (complex II, CII), ubiquinol-cytochrome c oxidoreductase (cytochrome b-c1 complex, complex III, CIII) and cytochrome c oxidase (complex IV, CIV), that cooperate to transfer electrons derived from NADH and succinate to molecular oxygen, creating an electrochemical gradient over the inner membrane that drives transmembrane transport and the ATP synthase. Cytochrome c oxidase is the component of the respiratory chain that catalyzes the reduction of oxygen to water. Electrons originating from reduced cytochrome c in the intermembrane space (IMS) are transferred via the dinuclear copper A center (CU(A)) of subunit 2 and heme A of subunit 1 to the active site in subunit 1, a binuclear center (BNC) formed by heme A3 and copper B (CU(B)). The BNC reduces molecular oxygen to 2 water molecules using 4 electrons from cytochrome c in the IMS and 4 protons from the mitochondrial matrix. The chain is Cytochrome c oxidase subunit 8B, mitochondrial (COX8B) from Carlito syrichta (Philippine tarsier).